Reading from the N-terminus, the 364-residue chain is BOLA class I histocompatibility antigen, alpha chain BL3-7 (364 aa).

The signal sequence occupies residues 1–27 (MRVMRVMRPRTLLLLLSGVLVLTETLA). Residues 28-117 (GSHSLRYFYT…LRGYYNQSET (90 aa)) form an alpha-1 region. The Extracellular portion of the chain corresponds to 28–310 (GSHSLRYFYT…WEPPQTSFLI (283 aa)). Asn-113 is a glycosylation site (N-linked (GlcNAc...) asparagine). The interval 118–209 (GSHNIQAMYG…ENGKDTLLRA (92 aa)) is alpha-2. Intrachain disulfides connect Cys-128/Cys-191 and Cys-230/Cys-286. Residues 210-301 (DPPKAHVTHH…GLQEPLTLRW (92 aa)) form an alpha-3 region. An Ig-like C1-type domain is found at 212–298 (PKAHVTHHSI…QHEGLQEPLT (87 aa)). Positions 302–310 (EPPQTSFLI) are connecting peptide. Residues 311–331 (MGIIVGLVLLVVALVAGAVIW) form a helical membrane-spanning segment. Over 332-364 (RKKRSGEKGRIYTQAASSDSAQGSDVSLTVPKV) the chain is Cytoplasmic. 2 positions are modified to phosphoserine: Ser-355 and Ser-358.

This sequence belongs to the MHC class I family. In terms of assembly, heterodimer of an alpha chain and a beta chain (beta-2-microglobulin).

The protein resides in the membrane. Involved in the presentation of foreign antigens to the immune system. The protein is BOLA class I histocompatibility antigen, alpha chain BL3-7 of Bos taurus (Bovine).